The chain runs to 139 residues: S-protein homolog 14 (139 aa).

An N-terminal signal peptide occupies residues 1-20 (MNRFIIFMFVVVTYFGLNVA). Asn136 is a glycosylation site (N-linked (GlcNAc...) asparagine).

The protein belongs to the plant self-incompatibility (S1) protein family.

The protein resides in the secreted. The protein is S-protein homolog 14 of Arabidopsis thaliana (Mouse-ear cress).